A 58-amino-acid chain; its full sequence is UPF0391 membrane protein Plav_0056 (58 aa).

Transmembrane regions (helical) follow at residues 4–24 (WAAVFFIIAVIAAVLGFGGLV) and 30–50 (IAQILFFIFLVLFVVSLIFGV).

This sequence belongs to the UPF0391 family.

It localises to the cell membrane. The sequence is that of UPF0391 membrane protein Plav_0056 from Parvibaculum lavamentivorans (strain DS-1 / DSM 13023 / NCIMB 13966).